The chain runs to 329 residues: uncharacterized protein (329 aa).

10 helical membrane-spanning segments follow: residues 9 to 29, 53 to 73, 105 to 125, 126 to 146, 154 to 174, 179 to 199, 210 to 230, 240 to 260, 273 to 293, and 296 to 316; these read LMGL…NVIV, SHSF…MALI, FLMF…PTGI, AITL…RLFN, WLVI…AYGG, LVLG…YTVF, VPFT…CLII, WLAI…GHVL, AAII…LAIQ, and LTNI…LLNY. EamA domains lie at 103–169 and 191–316; these read CGFL…LTIP and IVYA…LLNY.

Belongs to the EamA transporter family.

The protein localises to the cell membrane. This is an uncharacterized protein from Synechocystis sp. (strain ATCC 27184 / PCC 6803 / Kazusa).